The chain runs to 218 residues: Octanoyltransferase (218 aa).

Residues 32 to 218 (GEAAEAIWLL…LRTFPQHFPD (187 aa)) form the BPL/LPL catalytic domain. Substrate-binding positions include 71–78 (RGGQYTYH), 151–153 (AIG), and 164–166 (GLS). Catalysis depends on Cys-182, which acts as the Acyl-thioester intermediate.

The protein belongs to the LipB family.

The protein localises to the cytoplasm. The enzyme catalyses octanoyl-[ACP] + L-lysyl-[protein] = N(6)-octanoyl-L-lysyl-[protein] + holo-[ACP] + H(+). It participates in protein modification; protein lipoylation via endogenous pathway; protein N(6)-(lipoyl)lysine from octanoyl-[acyl-carrier-protein]: step 1/2. Functionally, catalyzes the transfer of endogenously produced octanoic acid from octanoyl-acyl-carrier-protein onto the lipoyl domains of lipoate-dependent enzymes. Lipoyl-ACP can also act as a substrate although octanoyl-ACP is likely to be the physiological substrate. The protein is Octanoyltransferase of Cereibacter sphaeroides (strain ATCC 17029 / ATH 2.4.9) (Rhodobacter sphaeroides).